The chain runs to 156 residues: NAD(P)H-quinone oxidoreductase subunit N (156 aa).

It belongs to the complex I NdhN subunit family. As to quaternary structure, NDH-1 can be composed of about 15 different subunits; different subcomplexes with different compositions have been identified which probably have different functions.

It localises to the cellular thylakoid membrane. The enzyme catalyses a plastoquinone + NADH + (n+1) H(+)(in) = a plastoquinol + NAD(+) + n H(+)(out). The catalysed reaction is a plastoquinone + NADPH + (n+1) H(+)(in) = a plastoquinol + NADP(+) + n H(+)(out). Functionally, NDH-1 shuttles electrons from an unknown electron donor, via FMN and iron-sulfur (Fe-S) centers, to quinones in the respiratory and/or the photosynthetic chain. The immediate electron acceptor for the enzyme in this species is believed to be plastoquinone. Couples the redox reaction to proton translocation, and thus conserves the redox energy in a proton gradient. Cyanobacterial NDH-1 also plays a role in inorganic carbon-concentration. In Prochlorococcus marinus subsp. pastoris (strain CCMP1986 / NIES-2087 / MED4), this protein is NAD(P)H-quinone oxidoreductase subunit N.